We begin with the raw amino-acid sequence, 287 residues long: Nucleotide-binding protein MXAN_6564 (287 aa).

13–20 (GMSGSGKS) provides a ligand contact to ATP. Residue 62-65 (DVRE) participates in GTP binding.

Belongs to the RapZ-like family.

Its function is as follows. Displays ATPase and GTPase activities. This is Nucleotide-binding protein MXAN_6564 from Myxococcus xanthus (strain DK1622).